Reading from the N-terminus, the 77-residue chain is Small ribosomal subunit protein bS21 (77 aa).

Residues arginine 55 to arginine 77 are disordered.

The protein belongs to the bacterial ribosomal protein bS21 family.

The polypeptide is Small ribosomal subunit protein bS21 (Bartonella quintana (strain Toulouse) (Rochalimaea quintana)).